A 718-amino-acid chain; its full sequence is Polyribonucleotide nucleotidyltransferase (718 aa).

Mg(2+)-binding residues include Asp496 and Asp502. Residues 563 to 622 enclose the KH domain; it reads PRLLTIKIDPDMIGLVIGPGGKTIKGITEETGAKIDIEDDGTVTISAVDENKAKRARNIV. In terms of domain architecture, S1 motif spans 632–700; the sequence is GDVYAGRVTR…NKGRINLTRL (69 aa).

As to quaternary structure, may form homodimers or higher order multimers. Interacts with RNase E (rne). Requires Mg(2+) as cofactor.

Its subcellular location is the cytoplasm. The catalysed reaction is RNA(n+1) + phosphate = RNA(n) + a ribonucleoside 5'-diphosphate. Its function is as follows. Involved in mRNA degradation. Catalyzes the phosphorolysis of single-stranded polyribonucleotides processively in the 3'- to 5'-direction. The polypeptide is Polyribonucleotide nucleotidyltransferase (Nostoc sp. (strain PCC 7120 / SAG 25.82 / UTEX 2576)).